Reading from the N-terminus, the 357-residue chain is Retinoic acid-induced protein 3 (357 aa).

Topologically, residues 1–33 (MATTVPDGCRNGLKSKYYRLCDKAEAWGIVLET) are extracellular. Residues 34–54 (VATAGVVTSVAFMLTLPILVC) form a helical membrane-spanning segment. The Cytoplasmic portion of the chain corresponds to 55–68 (KVQDSNRRKMLPTQ). A helical membrane pass occupies residues 69–89 (FLFLLGVLGIFGLTFAFIIGL). Over 90–97 (DGSTGPTR) the chain is Extracellular. Residues 98–118 (FFLFGILFSICFSCLLAHAVS) form a helical membrane-spanning segment. Residues 119–129 (LTKLVRGRKPL) lie on the Cytoplasmic side of the membrane. Residues 130–150 (SLLVILGLAVGFSLVQDVIAI) traverse the membrane as a helical segment. Residues 151 to 176 (EYIVLTMNRTNVNVFSELSAPRRNED) are Extracellular-facing. The N-linked (GlcNAc...) asparagine glycan is linked to asparagine 158. Residues 177–197 (FVLLLTYVLFLMALTFLMSSF) form a helical membrane-spanning segment. The Cytoplasmic portion of the chain corresponds to 198–212 (TFCGSFTGWKRHGAH). The chain crosses the membrane as a helical span at residues 213-233 (IYLTMLLSIAIWVAWITLLML). Topologically, residues 234-247 (PDFDRRWDDTILSS) are extracellular. A helical membrane pass occupies residues 248-268 (ALAANGWVFLLAYVSPEFWLL). At 269 to 357 (TKQRNPMDYP…KDYEVKKEGS (89 aa)) the chain is on the cytoplasmic side. Residue serine 301 is modified to Phosphoserine. 2 positions are modified to phosphotyrosine: tyrosine 317 and tyrosine 320. Position 345 is a phosphoserine (serine 345). A phosphotyrosine mark is found at tyrosine 347 and tyrosine 350.

The protein belongs to the G-protein coupled receptor 3 family. As to quaternary structure, interacts (via its transmembrane domain) with EGFR. In terms of processing, phosphorylated in two conserved double-tyrosine motifs, Tyr-317/Tyr-320 and Tyr-347/Tyr-350, by EGFR; leading to inactivation of the tumor suppressive function of GPRC5A in lung cancer cells. Tyr-317 and Tyr-320 are the preferred residues responsible for EGFR-mediated GPRC5A phosphorylation. In terms of tissue distribution, expressed at high level in fetal and adult lung tissues but repressed in most human lung cancers. Constitutively expressed in fetal kidney and adult placenta, kidney, prostate, testis, ovary, small intestine, colon, stomach, and spinal cord at low to moderate levels. Not detectable in fetal heart, brain, and liver and adult heart, brain, liver, skeletal muscle, pancreas, spleen, thymus, and peripheral leukocytes. According to PubMed:10783259, expressed at low but detectable level in pancreas and heart.

The protein localises to the cell membrane. It is found in the cytoplasmic vesicle membrane. Orphan receptor. Could be involved in modulating differentiation and maintaining homeostasis of epithelial cells. This retinoic acid-inducible GPCR provide evidence for a possible interaction between retinoid and G-protein signaling pathways. Functions as a negative modulator of EGFR signaling. May act as a lung tumor suppressor. The polypeptide is Retinoic acid-induced protein 3 (GPRC5A) (Homo sapiens (Human)).